A 161-amino-acid chain; its full sequence is Glycine-rich RNA-binding protein blt801 (161 aa).

In terms of domain architecture, RRM spans tyrosine 6–serine 84. The interval leucine 72–glutamate 161 is disordered. A Phosphoserine; by PKA modification is found at serine 87. The segment covering glycine 89–glutamate 161 has biased composition (gly residues).

Its function is as follows. Binds single-stranded DNA and homoribopolymers of guanine, uracil and adenine, but not cytosine. Also binds RNA, with a preference for RNA containing a high proportion of adenine within an open loop structure. Possibly has a role in RNA transcription or processing during stress. This is Glycine-rich RNA-binding protein blt801 from Hordeum vulgare (Barley).